Consider the following 173-residue polypeptide: Pyridoxal 5'-phosphate synthase subunit PdxT (173 aa).

Residue 49-51 (GES) coordinates L-glutamine. Cys81 (nucleophile) is an active-site residue. L-glutamine-binding positions include Arg113 and 141–142 (IR).

It belongs to the glutaminase PdxT/SNO family. As to quaternary structure, in the presence of PdxS, forms a dodecamer of heterodimers. Only shows activity in the heterodimer.

The enzyme catalyses aldehydo-D-ribose 5-phosphate + D-glyceraldehyde 3-phosphate + L-glutamine = pyridoxal 5'-phosphate + L-glutamate + phosphate + 3 H2O + H(+). It carries out the reaction L-glutamine + H2O = L-glutamate + NH4(+). It participates in cofactor biosynthesis; pyridoxal 5'-phosphate biosynthesis. Functionally, catalyzes the hydrolysis of glutamine to glutamate and ammonia as part of the biosynthesis of pyridoxal 5'-phosphate. The resulting ammonia molecule is channeled to the active site of PdxS. The protein is Pyridoxal 5'-phosphate synthase subunit PdxT of Mycolicibacterium paratuberculosis (strain ATCC BAA-968 / K-10) (Mycobacterium paratuberculosis).